A 200-amino-acid polypeptide reads, in one-letter code: Large ribosomal subunit protein uL4 (200 aa).

Residues 45-64 (QKTRAEVSGGGIKPWRQKGT) are disordered.

The protein belongs to the universal ribosomal protein uL4 family. In terms of assembly, part of the 50S ribosomal subunit.

Functionally, one of the primary rRNA binding proteins, this protein initially binds near the 5'-end of the 23S rRNA. It is important during the early stages of 50S assembly. It makes multiple contacts with different domains of the 23S rRNA in the assembled 50S subunit and ribosome. Forms part of the polypeptide exit tunnel. The polypeptide is Large ribosomal subunit protein uL4 (Psychrobacter cryohalolentis (strain ATCC BAA-1226 / DSM 17306 / VKM B-2378 / K5)).